A 295-amino-acid polypeptide reads, in one-letter code: sn-glycerol-3-phosphate transport system permease protein UgpA (295 aa).

Residues 1–11 (MSSSRPVFRSR) are Cytoplasmic-facing. Residues 12 to 32 (WLPYLLVAPQLIITVIFFIWP) traverse the membrane as a helical segment. At 33–80 (AGEALWYSLQSVDPFGFSSQFVGLDNFVTLFHDSYYLDAFWTTIKFST) the chain is on the periplasmic side. The 209-residue stretch at 76 to 284 (IKFSTFVTVS…FLVIVLTVVQ (209 aa)) folds into the ABC transmembrane type-1 domain. The helical transmembrane segment at 81-101 (FVTVSGLLVSLFFAALVEYIV) threads the bilayer. The Cytoplasmic portion of the chain corresponds to 102-109 (RGSRFYQT). The chain crosses the membrane as a helical span at residues 110-130 (LMLLPYAVAPAVAAVLWIFLF). The Periplasmic segment spans residues 131–156 (NPGRGLITHFLAEFGYDWNHAQNSGQ). A helical membrane pass occupies residues 157 to 177 (AMFLVVFASVWKQISYNFLFF). Residues 178-207 (YAALQSIPRSLIEAAAIDGAGPIRRFFKIA) lie on the Cytoplasmic side of the membrane. Residues 208 to 228 (LPLIAPVSFFLLVVNLVYAFF) form a helical membrane-spanning segment. Topologically, residues 229 to 262 (DTFPVIDAATSGGPVQATTTLIYKIYREGFTGLD) are periplasmic. The chain crosses the membrane as a helical span at residues 263 to 283 (LASSAAQSVVLMFLVIVLTVV). Over 284–295 (QFRYVEGKVRYQ) the chain is Cytoplasmic.

It belongs to the binding-protein-dependent transport system permease family. UgpAE subfamily. As to quaternary structure, the complex is composed of two ATP-binding proteins (UgpC), two transmembrane proteins (UgpA and UgpE) and a solute-binding protein (UgpB).

Its subcellular location is the cell inner membrane. In terms of biological role, part of the ABC transporter complex UgpBAEC involved in sn-glycerol-3-phosphate (G3P) import. Probably responsible for the translocation of the substrate across the membrane. The protein is sn-glycerol-3-phosphate transport system permease protein UgpA (ugpA) of Escherichia coli O6:K15:H31 (strain 536 / UPEC).